Here is a 476-residue protein sequence, read N- to C-terminus: Aspartyl/glutamyl-tRNA(Asn/Gln) amidotransferase subunit B (476 aa).

This sequence belongs to the GatB/GatE family. GatB subfamily. Heterotrimer of A, B and C subunits.

It catalyses the reaction L-glutamyl-tRNA(Gln) + L-glutamine + ATP + H2O = L-glutaminyl-tRNA(Gln) + L-glutamate + ADP + phosphate + H(+). The catalysed reaction is L-aspartyl-tRNA(Asn) + L-glutamine + ATP + H2O = L-asparaginyl-tRNA(Asn) + L-glutamate + ADP + phosphate + 2 H(+). Allows the formation of correctly charged Asn-tRNA(Asn) or Gln-tRNA(Gln) through the transamidation of misacylated Asp-tRNA(Asn) or Glu-tRNA(Gln) in organisms which lack either or both of asparaginyl-tRNA or glutaminyl-tRNA synthetases. The reaction takes place in the presence of glutamine and ATP through an activated phospho-Asp-tRNA(Asn) or phospho-Glu-tRNA(Gln). In Oceanobacillus iheyensis (strain DSM 14371 / CIP 107618 / JCM 11309 / KCTC 3954 / HTE831), this protein is Aspartyl/glutamyl-tRNA(Asn/Gln) amidotransferase subunit B.